The chain runs to 496 residues: uncharacterized protein (496 aa).

Residues 118-129 (LDRPFIKPRREN) are compositionally biased toward basic and acidic residues. Residues 118–187 (LDRPFIKPRR…NPHQSNRNTS (70 aa)) are disordered. Polar residues predominate over residues 151 to 187 (TSDSQYASPFENHSITNLPIGQKQPFNNPHQSNRNTS).

This is an uncharacterized protein from Acanthamoeba polyphaga mimivirus (APMV).